Reading from the N-terminus, the 149-residue chain is Calmodulin (149 aa).

The residue at position 2 (A2) is an N-acetylalanine. 4 EF-hand domains span residues 8 to 43 (EQIA…LGQN), 44 to 79 (PTEA…KMKD), 81 to 116 (DSEE…LGEK), and 117 to 149 (LTDE…MTNK). Positions 21, 23, 25, 27, 32, 57, 59, 61, 63, 68, 94, 96, 98, and 105 each coordinate Ca(2+). K116 carries the N6,N6,N6-trimethyllysine modification. Residues D130, D132, D134, Q136, and E141 each contribute to the Ca(2+) site.

Belongs to the calmodulin family.

In terms of biological role, calmodulin mediates the control of a large number of enzymes, ion channels and other proteins by Ca(2+). Among the enzymes to be stimulated by the calmodulin-Ca(2+) complex are a number of protein kinases and phosphatases. This Ciona intestinalis (Transparent sea squirt) protein is Calmodulin.